Reading from the N-terminus, the 287-residue chain is Pyridoxal kinase PdxY (287 aa).

Substrate is bound by residues Ser-10 and 45–46 (TQ). ATP contacts are provided by residues Asp-112, Ala-144, Glu-149, Lys-182, and 209 to 212 (RPLV). Residue Asp-224 coordinates substrate.

The protein belongs to the pyridoxine kinase family. PdxY subfamily. As to quaternary structure, homodimer. Mg(2+) serves as cofactor.

It carries out the reaction pyridoxal + ATP = pyridoxal 5'-phosphate + ADP + H(+). Its pathway is cofactor metabolism; pyridoxal 5'-phosphate salvage; pyridoxal 5'-phosphate from pyridoxal: step 1/1. Functionally, pyridoxal kinase involved in the salvage pathway of pyridoxal 5'-phosphate (PLP). Catalyzes the phosphorylation of pyridoxal to PLP. This chain is Pyridoxal kinase PdxY, found in Escherichia coli O6:H1 (strain CFT073 / ATCC 700928 / UPEC).